The primary structure comprises 30 residues: Nattererin-2 (30 aa).

In terms of tissue distribution, expressed by the skin glands.

It is found in the secreted. Functionally, probably has antibacterial activity. The chain is Nattererin-2 from Physalaemus nattereri (Cuyaba dwarf frog).